A 215-amino-acid chain; its full sequence is MILVLVGPPGAGKGTQAKLLCARFGIPQISTGDMLREAKRSGTLEKRYLDIMDSGGLLPDEAVIGLIARRTVEPDCSNGFLLDGFPRTVPQADALDELLASANQGGKRIDAVIQLDVARPLLEERLIHRRTDKRSGQIYHLVYNPPPPGAELEHRADDRPEAVAKRLDAYEAMTAALLPFYEQKKLLHRVDGVGKPEEVTHRVLSAIGRPGSGGE.

10-15 (GAGKGT) lines the ATP pocket. The interval 30 to 58 (STGDMLREAKRSGTLEKRYLDIMDSGGLL) is NMP. AMP-binding positions include T31, R36, 56-58 (GLL), 84-87 (GFPR), and Q91. Positions 128–158 (HRRTDKRSGQIYHLVYNPPPPGAELEHRADD) are LID. Residues R129 and 138 to 139 (IY) each bind ATP. AMP is bound by residues R155 and R166. G194 contacts ATP.

This sequence belongs to the adenylate kinase family. Monomer.

Its subcellular location is the cytoplasm. It catalyses the reaction AMP + ATP = 2 ADP. Its pathway is purine metabolism; AMP biosynthesis via salvage pathway; AMP from ADP: step 1/1. Catalyzes the reversible transfer of the terminal phosphate group between ATP and AMP. Plays an important role in cellular energy homeostasis and in adenine nucleotide metabolism. The chain is Adenylate kinase from Sorangium cellulosum (strain So ce56) (Polyangium cellulosum (strain So ce56)).